The sequence spans 76 residues: Acyl carrier protein (76 aa).

The region spanning 1 to 76 (MSVEEKVKKI…DAIDYIAGKQ (76 aa)) is the Carrier domain. S36 is subject to O-(pantetheine 4'-phosphoryl)serine.

This sequence belongs to the acyl carrier protein (ACP) family. In terms of processing, 4'-phosphopantetheine is transferred from CoA to a specific serine of apo-ACP by AcpS. This modification is essential for activity because fatty acids are bound in thioester linkage to the sulfhydryl of the prosthetic group.

It localises to the cytoplasm. It participates in lipid metabolism; fatty acid biosynthesis. Its function is as follows. Carrier of the growing fatty acid chain in fatty acid biosynthesis. The sequence is that of Acyl carrier protein from Oleidesulfovibrio alaskensis (strain ATCC BAA-1058 / DSM 17464 / G20) (Desulfovibrio alaskensis).